Here is a 133-residue protein sequence, read N- to C-terminus: Large ribosomal subunit protein bL17 (133 aa).

The protein belongs to the bacterial ribosomal protein bL17 family. In terms of assembly, part of the 50S ribosomal subunit. Contacts protein L32.

The chain is Large ribosomal subunit protein bL17 from Alteromonas mediterranea (strain DSM 17117 / CIP 110805 / LMG 28347 / Deep ecotype).